Consider the following 150-residue polypeptide: uncharacterized protein (150 aa).

A compositionally biased stretch (low complexity) spans 1–19 (MNDDSSSSSSGDSSDGSSG). 2 disordered regions span residues 1–21 (MNDD…SGTT) and 85–131 (EPEA…AYPE). The segment covering 106–115 (RPPPTEPPTV) has biased composition (pro residues).

This is an uncharacterized protein from Schizosaccharomyces pombe (strain 972 / ATCC 24843) (Fission yeast).